Reading from the N-terminus, the 202-residue chain is Adenylyl-sulfate kinase (202 aa).

35 to 42 lines the ATP pocket; it reads GLSGSGKS. The active-site Phosphoserine intermediate is Ser109.

The protein belongs to the APS kinase family.

It catalyses the reaction adenosine 5'-phosphosulfate + ATP = 3'-phosphoadenylyl sulfate + ADP + H(+). It functions in the pathway sulfur metabolism; hydrogen sulfide biosynthesis; sulfite from sulfate: step 2/3. Catalyzes the synthesis of activated sulfate. This chain is Adenylyl-sulfate kinase, found in Bacteroides fragilis (strain ATCC 25285 / DSM 2151 / CCUG 4856 / JCM 11019 / LMG 10263 / NCTC 9343 / Onslow / VPI 2553 / EN-2).